The following is a 257-amino-acid chain: Hydroxyethylthiazole kinase (257 aa).

Methionine 49 is a binding site for substrate. Residues arginine 124 and threonine 170 each coordinate ATP. Glycine 197 is a substrate binding site.

Belongs to the Thz kinase family. It depends on Mg(2+) as a cofactor.

The enzyme catalyses 5-(2-hydroxyethyl)-4-methylthiazole + ATP = 4-methyl-5-(2-phosphooxyethyl)-thiazole + ADP + H(+). Its pathway is cofactor biosynthesis; thiamine diphosphate biosynthesis; 4-methyl-5-(2-phosphoethyl)-thiazole from 5-(2-hydroxyethyl)-4-methylthiazole: step 1/1. Its function is as follows. Catalyzes the phosphorylation of the hydroxyl group of 4-methyl-5-beta-hydroxyethylthiazole (THZ). This Klebsiella pneumoniae (strain 342) protein is Hydroxyethylthiazole kinase.